The chain runs to 143 residues: Sporulation-specific cell division protein SsgB (143 aa).

It belongs to the SsgA family. Interacts with SsgA. Interacts with FtsZ (via N-terminus).

Its subcellular location is the cell septum. Its function is as follows. Involved in sporulation-specific cell division. Required for early stages of sporulation. Important in the process of growth cessation prior to sporulation-specific cell division. Recruits cell division protein FtsZ to the future septum sites and tethers the contractile ring structure (Z ring) to the cytoplasmic membrane during sporulation. Stimulates polymerization and filament length of FtsZ in vitro. This chain is Sporulation-specific cell division protein SsgB, found in Salinispora tropica (strain ATCC BAA-916 / DSM 44818 / JCM 13857 / NBRC 105044 / CNB-440).